The primary structure comprises 98 residues: MAATARHYDTILSPVITEKATLLSEQNKVVFRVSADASKDEIAAAVEELFKVKVTKVNTLVTKGKTKRFRGIIGRRSDVKKAIVTLAEGQSIDITTGL.

Belongs to the universal ribosomal protein uL23 family. As to quaternary structure, part of the 50S ribosomal subunit. Contacts protein L29, and trigger factor when it is bound to the ribosome.

One of the early assembly proteins it binds 23S rRNA. One of the proteins that surrounds the polypeptide exit tunnel on the outside of the ribosome. Forms the main docking site for trigger factor binding to the ribosome. In Caulobacter sp. (strain K31), this protein is Large ribosomal subunit protein uL23.